We begin with the raw amino-acid sequence, 98 residues long: Cysteine-rich and transmembrane domain-containing protein WIH2 (98 aa).

The tract at residues 1–77 is disordered; sequence MSQYNQPPVG…PPQHQQQQSS (77 aa). Positions 9 to 21 are enriched in pro residues; it reads VGVPPPQGYPPEG. Residues 37-55 are compositionally biased toward low complexity; sequence YPQQGYPPQGYPQQGYPQQ. Pro residues predominate over residues 56-70; it reads GYPPPYAPQYPPPPQ. The helical transmembrane segment at 75-92 threads the bilayer; sequence QSSPGFLEGCLAALCCCC.

Belongs to the CYSTM1 family. As to expression, expressed in floral organ primordia.

Its subcellular location is the membrane. Required for the promotion of megasporogenesis, or promotion of germ cell formation from somatic precursor cells. Acts redundantly with WIH1. Functions in a genetic pathway downstream of SPL/NZZ and WUS and together with TRN2 in promoting megasporogenesis. The polypeptide is Cysteine-rich and transmembrane domain-containing protein WIH2 (Arabidopsis thaliana (Mouse-ear cress)).